A 657-amino-acid chain; its full sequence is tRNA 5-methylaminomethyl-2-thiouridine biosynthesis bifunctional protein MnmC (657 aa).

Positions 1–233 (MPRGLILATP…KRDMTVAAFP (233 aa)) are tRNA (mnm(5)s(2)U34)-methyltransferase. Residues 256–657 (LGAGLAGCSV…RALRHGKHAA (402 aa)) form an FAD-dependent cmnm(5)s(2)U34 oxidoreductase region.

The protein in the N-terminal section; belongs to the methyltransferase superfamily. tRNA (mnm(5)s(2)U34)-methyltransferase family. It in the C-terminal section; belongs to the DAO family. The cofactor is FAD.

Its subcellular location is the cytoplasm. It carries out the reaction 5-aminomethyl-2-thiouridine(34) in tRNA + S-adenosyl-L-methionine = 5-methylaminomethyl-2-thiouridine(34) in tRNA + S-adenosyl-L-homocysteine + H(+). Catalyzes the last two steps in the biosynthesis of 5-methylaminomethyl-2-thiouridine (mnm(5)s(2)U) at the wobble position (U34) in tRNA. Catalyzes the FAD-dependent demodification of cmnm(5)s(2)U34 to nm(5)s(2)U34, followed by the transfer of a methyl group from S-adenosyl-L-methionine to nm(5)s(2)U34, to form mnm(5)s(2)U34. The polypeptide is tRNA 5-methylaminomethyl-2-thiouridine biosynthesis bifunctional protein MnmC (Ralstonia nicotianae (strain ATCC BAA-1114 / GMI1000) (Ralstonia solanacearum)).